Here is a 355-residue protein sequence, read N- to C-terminus: Protein RecA (355 aa).

72–79 contributes to the ATP binding site; it reads GPESSGKT.

Belongs to the RecA family.

The protein resides in the cytoplasm. Its function is as follows. Can catalyze the hydrolysis of ATP in the presence of single-stranded DNA, the ATP-dependent uptake of single-stranded DNA by duplex DNA, and the ATP-dependent hybridization of homologous single-stranded DNAs. It interacts with LexA causing its activation and leading to its autocatalytic cleavage. The polypeptide is Protein RecA (Wolbachia sp. subsp. Drosophila simulans (strain wRi)).